Consider the following 368-residue polypeptide: MWIKELELKHYRNYDHLLASFSSGLNVFIGNNAQGKTNFLEAIYFLSLTRSHRTRADKELIHFDHSTVSLTGKIQRISGTVDLEINLSDKGRVTKINALKQAKLSDYIGTMMVVLFAPEDLQLVKGAPSLRRKFIDIDLGQIKPVYLSELSHYNHVLKQRNSYLKSAQQIDAAFLAVLDEQLASYGARVMEHRIDFINALEKEANTHHQAISNGLESLSLSYQSSVVFDKKTNIYQQFLYQLEKNHQKDFFRKNTSVGPHRDELAFYINGMNANFASQGQHRSLILSLKMAEVSLMKALTGDNPILLLDDVMSELDNTRQTKLLETVIKENVQTFITTTSLDHLSQLPEGIRIFHVTKGTVQIDSDIH.

30–37 (GNNAQGKT) serves as a coordination point for ATP.

It belongs to the RecF family.

It localises to the cytoplasm. Its function is as follows. The RecF protein is involved in DNA metabolism; it is required for DNA replication and normal SOS inducibility. RecF binds preferentially to single-stranded, linear DNA. It also seems to bind ATP. The polypeptide is DNA replication and repair protein RecF (Streptococcus pyogenes serotype M12 (strain MGAS9429)).